A 171-amino-acid chain; its full sequence is MTLLSSNELRKLIQATPHLLENAVDIETQIQPNGLELTLKEIKTIEGVGAVDFDNSERKVPDAKPLEFEDDDWIHLPKGIYKVIFNEIVNIPMNLAAIAKPRSSLIRCGATLETAVWDAGYRGRSESMLVVYNSAGFRLKKNARIMQLLFYTLNSEVEEGYSGVYQNENTK.

This sequence belongs to the dCTP deaminase family. Archaeal dUTPase subfamily.

It carries out the reaction dUTP + H2O = dUMP + diphosphate + H(+). It functions in the pathway pyrimidine metabolism; dUMP biosynthesis; dUMP from dCTP (dUTP route): step 2/2. Its function is as follows. This enzyme is involved in nucleotide metabolism: it produces dUMP, the immediate precursor of thymidine nucleotides and it decreases the intracellular concentration of dUTP so that uracil cannot be incorporated into DNA. The sequence is that of Probable deoxyuridine 5'-triphosphate nucleotidohydrolase from Methanosarcina acetivorans (strain ATCC 35395 / DSM 2834 / JCM 12185 / C2A).